Reading from the N-terminus, the 492-residue chain is Pre-mRNA-processing factor 19 (492 aa).

One can recognise a U-box domain in the interval 1–72 (MSFVCGISGE…APRNVSGTSI (72 aa)). 6 WD repeats span residues 207–246 (HSTG…VMQT), 249–288 (GHNK…SKAI), 291–330 (VHQA…SLCK), 336–375 (GSQI…VAAA), 378–417 (GHTA…NLKT), and 461–491 (DHSG…RVFS).

This sequence belongs to the WD repeat PRP19 family. In terms of assembly, homotetramer. Component of the NTC complex (or PRP19-associated complex) which is associated with the spliceosome.

It is found in the nucleus. The protein localises to the nucleoplasm. The catalysed reaction is S-ubiquitinyl-[E2 ubiquitin-conjugating enzyme]-L-cysteine + [acceptor protein]-L-lysine = [E2 ubiquitin-conjugating enzyme]-L-cysteine + N(6)-ubiquitinyl-[acceptor protein]-L-lysine.. It functions in the pathway protein modification; protein ubiquitination. Probable ubiquitin-protein ligase which is mainly involved pre-mRNA splicing and DNA repair. Core component of the NTC/Nineteen complex which is part of the spliceosome and participates in its assembly, its remodeling and is required for its activity. Together with emb-4, necessary for interaction of rnp-4, a probable exon junction complex component, with mRNAs and spliceosomal snRNAs. Plays a role in nuclear retention of unspliced mRNAs. The polypeptide is Pre-mRNA-processing factor 19 (prp-19) (Caenorhabditis elegans).